A 303-amino-acid polypeptide reads, in one-letter code: Eukaryotic translation initiation factor 3 subunit G (303 aa).

Disordered regions lie at residues 1-32, 81-100, 105-126, and 181-215; these read MAAV…QTIV, GLSA…VGEN, PSAN…NAMK, and GAAG…AGGK. A compositionally biased stretch (basic and acidic residues) spans 109–126; sequence WRKDQKDESKDANANAMK. In terms of domain architecture, RRM spans 223–301; it reads ATLRVTNVSE…LILRVEFAKK (79 aa).

Belongs to the eIF-3 subunit G family. Component of the eukaryotic translation initiation factor 3 (eIF-3) complex.

The protein resides in the cytoplasm. Its function is as follows. RNA-binding component of the eukaryotic translation initiation factor 3 (eIF-3) complex, which is involved in protein synthesis of a specialized repertoire of mRNAs and, together with other initiation factors, stimulates binding of mRNA and methionyl-tRNAi to the 40S ribosome. The eIF-3 complex specifically targets and initiates translation of a subset of mRNAs involved in cell proliferation. This subunit can bind 18S rRNA. This chain is Eukaryotic translation initiation factor 3 subunit G, found in Pyricularia oryzae (strain 70-15 / ATCC MYA-4617 / FGSC 8958) (Rice blast fungus).